The following is a 115-amino-acid chain: T cell receptor beta variable 7-4 (115 aa).

An N-terminal signal peptide occupies residues M1–A21. In terms of domain architecture, Ig-like spans G22–L115. C42 and C111 form a disulfide bridge. The tract at residues Y67–K97 is disordered.

As to quaternary structure, alpha-beta TR is a heterodimer composed of an alpha and beta chain; disulfide-linked. The alpha-beta TR is associated with the transmembrane signaling CD3 coreceptor proteins to form the TR-CD3 (TcR or TCR). The assembly of alpha-beta TR heterodimers with CD3 occurs in the endoplasmic reticulum where a single alpha-beta TR heterodimer associates with one CD3D-CD3E heterodimer, one CD3G-CD3E heterodimer and one CD247 homodimer forming a stable octameric structure. CD3D-CD3E and CD3G-CD3E heterodimers preferentially associate with TR alpha and TR beta chains, respectively. The association of the CD247 homodimer is the last step of TcR assembly in the endoplasmic reticulum and is required for transport to the cell surface.

It is found in the cell membrane. V region of the variable domain of T cell receptor (TR) beta chain that participates in the antigen recognition. Alpha-beta T cell receptors are antigen specific receptors which are essential to the immune response and are present on the cell surface of T lymphocytes. Recognize peptide-major histocompatibility (MH) (pMH) complexes that are displayed by antigen presenting cells (APC), a prerequisite for efficient T cell adaptive immunity against pathogens. Binding of alpha-beta TR to pMH complex initiates TR-CD3 clustering on the cell surface and intracellular activation of LCK that phosphorylates the ITAM motifs of CD3G, CD3D, CD3E and CD247 enabling the recruitment of ZAP70. In turn ZAP70 phosphorylates LAT, which recruits numerous signaling molecules to form the LAT signalosome. The LAT signalosome propagates signal branching to three major signaling pathways, the calcium, the mitogen-activated protein kinase (MAPK) kinase and the nuclear factor NF-kappa-B (NF-kB) pathways, leading to the mobilization of transcription factors that are critical for gene expression and essential for T cell growth and differentiation. The T cell repertoire is generated in the thymus, by V-(D)-J rearrangement. This repertoire is then shaped by intrathymic selection events to generate a peripheral T cell pool of self-MH restricted, non-autoaggressive T cells. Post-thymic interaction of alpha-beta TR with the pMH complexes shapes TR structural and functional avidity. This is T cell receptor beta variable 7-4 from Homo sapiens (Human).